Reading from the N-terminus, the 1043-residue chain is Isoleucine--tRNA ligase (1043 aa).

Pro46 and His57 together coordinate L-isoleucyl-5'-AMP. The 'HIGH' region signature appears at 47–57 (PTANGLPHVGH). Residues Cys181 and Cys184 each contribute to the Zn(2+) site. Residues His319 and Asp328 each coordinate L-valine. Cys389, Cys392, Cys461, Cys464, Cys502, and Cys504 together coordinate Zn(2+). L-isoleucyl-5'-AMP-binding residues include Glu550, Gly551, Asp553, Gln554, and His581. Residues 591–595 (KMSKS) carry the 'KMSKS' region motif. An ATP-binding site is contributed by Lys594.

Belongs to the class-I aminoacyl-tRNA synthetase family. IleS type 2 subfamily. In terms of assembly, monomer. Zn(2+) serves as cofactor.

The protein resides in the cytoplasm. The catalysed reaction is tRNA(Ile) + L-isoleucine + ATP = L-isoleucyl-tRNA(Ile) + AMP + diphosphate. Its function is as follows. Catalyzes the attachment of isoleucine to tRNA(Ile). As IleRS can inadvertently accommodate and process structurally similar amino acids such as valine, to avoid such errors it has two additional distinct tRNA(Ile)-dependent editing activities. One activity is designated as 'pretransfer' editing and involves the hydrolysis of activated Val-AMP. The other activity is designated 'posttransfer' editing and involves deacylation of mischarged Val-tRNA(Ile). The sequence is that of Isoleucine--tRNA ligase (ileS) from Thermus thermophilus (strain ATCC 27634 / DSM 579 / HB8).